Consider the following 352-residue polypeptide: Rhodopsin (352 aa).

The Extracellular segment spans residues 1-36 (MNGTEGPFFYIPMVNTTGVVRSPYEYPQYYLVNPAA). 2 N-linked (GlcNAc...) asparagine glycosylation sites follow: Asn2 and Asn15. Residues 37-61 (YACLGAYMFFLILVGFPVNFLTLYV) form a helical membrane-spanning segment. The Cytoplasmic segment spans residues 62-73 (TLEHKKLRTPLN). A helical transmembrane segment spans residues 74–96 (YILLNLAVADLFMVFGGFTTTIY). Residues 97-110 (TSMHGYFVLGRLGC) lie on the Extracellular side of the membrane. Cys110 and Cys187 are oxidised to a cystine. The chain crosses the membrane as a helical span at residues 111 to 133 (NIEGFFATLGGEIALWSLVVLAI). A 'Ionic lock' involved in activated form stabilization motif is present at residues 134 to 136 (ERW). The Cytoplasmic segment spans residues 134–152 (ERWVVVCKPISNFRFGENH). Residues 153 to 173 (AIMGVAFTWFMASACAVPPLV) traverse the membrane as a helical segment. Topologically, residues 174-202 (GWSRYIPEGMQCSCGIDYYTRAEGFNNES) are extracellular. Asn200 carries an N-linked (GlcNAc...) asparagine glycan. The chain crosses the membrane as a helical span at residues 203 to 224 (FVIYMFTVHFCIPLAVVGFCYG). The Cytoplasmic segment spans residues 225-252 (RLLCAVKEAAAAQQESETTQRAEREVSR). A helical membrane pass occupies residues 253-274 (MVVIMVIGFLVCWLPYASVAWY). Topologically, residues 275-286 (IFTHQGSEFGPL) are extracellular. Residues 287–308 (FMTIPAFFAKSSSIYNPMIYIC) traverse the membrane as a helical segment. Lys296 is subject to N6-(retinylidene)lysine. The Cytoplasmic segment spans residues 309–352 (MNKQFRHCMITTLCCGKNPFEEEEGASTTKTEASSVSSSSVSPA). 2 S-palmitoyl cysteine lipidation sites follow: Cys322 and Cys323. Residues 331 to 352 (EEGASTTKTEASSVSSSSVSPA) form a disordered region. The span at 342-352 (SSVSSSSVSPA) shows a compositional bias: low complexity.

It belongs to the G-protein coupled receptor 1 family. Opsin subfamily. Phosphorylated on some or all of the serine and threonine residues present in the C-terminal region. Post-translationally, contains one covalently linked retinal chromophore.

The protein resides in the membrane. Its subcellular location is the cell projection. It is found in the cilium. It localises to the photoreceptor outer segment. Photoreceptor required for image-forming vision at low light intensity. While most salt water fish species use retinal as chromophore, most freshwater fish use 3-dehydroretinal, or a mixture of retinal and 3-dehydroretinal. Light-induced isomerization of 11-cis to all-trans retinal triggers a conformational change that activates signaling via G-proteins. Subsequent receptor phosphorylation mediates displacement of the bound G-protein alpha subunit by arrestin and terminates signaling. The polypeptide is Rhodopsin (rho) (Gobius niger (Black goby)).